We begin with the raw amino-acid sequence, 351 residues long: Rab9 effector protein with kelch motifs (351 aa).

6 Kelch repeats span residues 54-102 (KIVI…PESE), 105-156 (SLWV…TNSA), 162-210 (LFVF…VITA), 214-263 (DIYI…TFNK), 264-313 (NIFI…LLPW), and 328-351 (LCFV…TVLT).

Its function is as follows. Rab9 effector required for endosome to trans-Golgi network (TGN) transport. The sequence is that of Rab9 effector protein with kelch motifs (rabepk) from Danio rerio (Zebrafish).